The following is a 475-amino-acid chain: Lipoprotein lipase (475 aa).

A signal peptide spans 1–27 (MESKALLLLALAVWLQSLTASRGGVAA). An interaction with GPIHBP1 region spans residues 32 to 53 (RDFIDIESKFALRTPEDTAEDT). A disulfide bridge links C54 with C67. The N-linked (GlcNAc...) asparagine glycan is linked to N70. Position 121 is a 3'-nitrotyrosine (Y121). The Nucleophile role is filled by S159. D183 acts as the Charge relay system in catalysis. The residue at position 191 (Y191) is a 3'-nitrotyrosine. 4 residues coordinate Ca(2+): A194, R197, S199, and D202. A disulfide bond links C243 and C266. Positions 243–266 (CNIGEAIRVIAERGLGDVDQLVKC) are essential for determining substrate specificity. The Charge relay system role is filled by H268. Intrachain disulfides connect C291-C310 and C302-C305. Residues 341 to 464 (FHYQVKIHFS…KGKAPAVFVK (124 aa)) enclose the PLAT domain. 3'-nitrotyrosine is present on Y343. N386 is a glycosylation site (N-linked (GlcNAc...) asparagine). The interval 417-421 (WSDWW) is important for interaction with lipoprotein particles. The interval 430–434 (KIRVK) is important for heparin binding. An interaction with GPIHBP1 region spans residues 443–467 (IFCSREKVSHLQKGKAPAVFVKCHD). Cysteines 445 and 465 form a disulfide.

The protein belongs to the AB hydrolase superfamily. Lipase family. Homodimer. Interacts with GPIHBP1 with 1:1 stoichiometry. Interacts with APOC2; the interaction activates LPL activity in the presence of lipids. Interaction with heparan sulfate proteoglycans is required to protect LPL against loss of activity. Associates with lipoprotein particles in blood plasma. Interacts with LMF1 and SEL1L; interaction with SEL1L is required to prevent aggregation of newly synthesized LPL in the endoplasmic reticulum (ER), and for normal export of LPL from the ER to the extracellular space. Interacts with SORL1; SORL1 acts as a sorting receptor, promoting LPL localization to endosomes and later to lysosomes, leading to degradation of newly synthesized LPL. In terms of processing, tyrosine nitration after lipopolysaccharide (LPS) challenge down-regulates the lipase activity. In terms of tissue distribution, highest levels in the spinal cord.

It is found in the cell membrane. It localises to the secreted. The protein resides in the extracellular space. The protein localises to the extracellular matrix. It carries out the reaction a triacylglycerol + H2O = a diacylglycerol + a fatty acid + H(+). The catalysed reaction is a 1,2-diacyl-sn-glycero-3-phosphocholine + H2O = a 2-acyl-sn-glycero-3-phosphocholine + a fatty acid + H(+). It catalyses the reaction 1,2,3-tri-(9Z-octadecenoyl)-glycerol + H2O = di-(9Z)-octadecenoylglycerol + (9Z)-octadecenoate + H(+). The enzyme catalyses 1,2-di-(9Z-octadecenoyl)-sn-glycero-3-phosphocholine + H2O = (9Z-octadecenoyl)-sn-glycero-3-phosphocholine + (9Z)-octadecenoate + H(+). It carries out the reaction 1,2,3-tributanoylglycerol + H2O = dibutanoylglycerol + butanoate + H(+). The catalysed reaction is 1,2-dihexadecanoyl-sn-glycero-3-phosphocholine + H2O = hexadecanoyl-sn-glycero-3-phosphocholine + hexadecanoate + H(+). Its activity is regulated as follows. The apolipoprotein APOC2 acts as a coactivator of LPL activity. Ca(2+) binding promotes protein stability and formation of the active homodimer. Interaction with GPIHBP1 protects LPL against inactivation by ANGPTL4. Key enzyme in triglyceride metabolism. Catalyzes the hydrolysis of triglycerides from circulating chylomicrons and very low density lipoproteins (VLDL), and thereby plays an important role in lipid clearance from the blood stream, lipid utilization and storage. Although it has both phospholipase and triglyceride lipase activities it is primarily a triglyceride lipase with low but detectable phospholipase activity. Mediates margination of triglyceride-rich lipoprotein particles in capillaries. Recruited to its site of action on the luminal surface of vascular endothelium by binding to GPIHBP1 and cell surface heparan sulfate proteoglycans. The protein is Lipoprotein lipase (LPL) of Papio anubis (Olive baboon).